Reading from the N-terminus, the 284-residue chain is Bifunctional protein FolD (284 aa).

NADP(+) is bound by residues 165–167 (GRS), Ser-190, and Val-231.

Belongs to the tetrahydrofolate dehydrogenase/cyclohydrolase family. In terms of assembly, homodimer.

The enzyme catalyses (6R)-5,10-methylene-5,6,7,8-tetrahydrofolate + NADP(+) = (6R)-5,10-methenyltetrahydrofolate + NADPH. The catalysed reaction is (6R)-5,10-methenyltetrahydrofolate + H2O = (6R)-10-formyltetrahydrofolate + H(+). Its pathway is one-carbon metabolism; tetrahydrofolate interconversion. Catalyzes the oxidation of 5,10-methylenetetrahydrofolate to 5,10-methenyltetrahydrofolate and then the hydrolysis of 5,10-methenyltetrahydrofolate to 10-formyltetrahydrofolate. The sequence is that of Bifunctional protein FolD from Bacillus licheniformis (strain ATCC 14580 / DSM 13 / JCM 2505 / CCUG 7422 / NBRC 12200 / NCIMB 9375 / NCTC 10341 / NRRL NRS-1264 / Gibson 46).